The chain runs to 296 residues: Protein FAM110A (296 aa).

Disordered stretches follow at residues asparagine 61 to glycine 97 and proline 117 to leucine 192. Pro residues-rich tracts occupy residues proline 139–serine 148 and proline 161–serine 170.

Belongs to the FAM110 family. As to quaternary structure, may interact with CSPP1.

It is found in the cytoplasm. It localises to the cytoskeleton. The protein localises to the microtubule organizing center. Its subcellular location is the centrosome. The protein resides in the spindle pole. In Mus musculus (Mouse), this protein is Protein FAM110A (Fam110a).